The following is a 423-amino-acid chain: Maltoporin 1 (423 aa).

Positions methionine 1–alanine 24 are cleaved as a signal peptide.

The protein belongs to the porin LamB (TC 1.B.3) family. In terms of assembly, homotrimer formed of three 18-stranded antiparallel beta-barrels, containing three independent channels.

It localises to the cell outer membrane. It carries out the reaction beta-maltose(in) = beta-maltose(out). In terms of biological role, involved in the transport of maltose and maltodextrins. In Yersinia pestis bv. Antiqua (strain Antiqua), this protein is Maltoporin 1.